A 1426-amino-acid polypeptide reads, in one-letter code: Protein RhsD (1426 aa).

Positions 256–285 (AEEARTSSLSSSDSSRPLSASAFPDTLPGT) are disordered. A compositionally biased stretch (low complexity) spans 262–277 (SSLSSSDSSRPLSASA). Residues 320-1197 (YTEAGELLAV…LNEENPHHVY (878 aa)) are 28 X approximate tandem repeats. 27 consecutive repeat copies span residues 334–356 (NTQV…HRYA), 357–378 (GRPE…LNPA), 379–421 (GLSY…ELAD), 422–442 (GSVT…TDAA), 443–464 (GRRT…TTPD), 465–485 (GRET…VSPD), 486–506 (GLES…TSRS), 507–529 (GETV…TDAT), 530–550 (GSTR…TDCS), 551–571 (GYQT…HREE), 572–592 (GISL…KDAQ), 593–613 (GRET…ITPD), 614–633 (GNRS…TTQG), 634–654 (GLTR…TNEN), 655–675 (GSHS…GGFD), 676–695 (GRTQ…SEDE), 696–715 (GLVI…RTVN), 716–738 (GEPA…HLSE), 739–762 (GHRV…QTVE), 812–832 (GGTP…VRSF), 833–861 (GSMA…HLNS), 862–882 (LVYD…ISGP), 883–905 (RQTR…LAPD), 906–941 (LDIR…NRIA), 942–970 (EDAH…VIRT), 971–995 (DDER…IQHG), and 996–1030 (EPLV…MSLS). Positions 1073 to 1085 (ENGEREKAQRRSL) are enriched in basic and acidic residues. Positions 1073–1097 (ENGEREKAQRRSLAETLQQEGSENG) are disordered. Residues 1173 to 1197 (GNTAWSAEYDEWGNQLNEENPHHVY) form repeat 28.

Belongs to the RHS family.

In terms of biological role, rhs elements have a nonessential function. They may play an important role in the natural ecology of the cell. This Escherichia coli (strain K12) protein is Protein RhsD (rhsD).